Consider the following 362-residue polypeptide: Phosphoserine aminotransferase (362 aa).

2 residues coordinate L-glutamate: Ser-9 and Arg-42. Pyridoxal 5'-phosphate-binding positions include 76 to 77, Trp-102, Thr-153, Asp-174, and Gln-197; that span reads GR. Lys-198 carries the N6-(pyridoxal phosphate)lysine modification. 239–240 provides a ligand contact to pyridoxal 5'-phosphate; the sequence is NT.

Belongs to the class-V pyridoxal-phosphate-dependent aminotransferase family. SerC subfamily. Homodimer. Pyridoxal 5'-phosphate serves as cofactor.

Its subcellular location is the cytoplasm. The catalysed reaction is O-phospho-L-serine + 2-oxoglutarate = 3-phosphooxypyruvate + L-glutamate. It catalyses the reaction 4-(phosphooxy)-L-threonine + 2-oxoglutarate = (R)-3-hydroxy-2-oxo-4-phosphooxybutanoate + L-glutamate. The protein operates within amino-acid biosynthesis; L-serine biosynthesis; L-serine from 3-phospho-D-glycerate: step 2/3. It functions in the pathway cofactor biosynthesis; pyridoxine 5'-phosphate biosynthesis; pyridoxine 5'-phosphate from D-erythrose 4-phosphate: step 3/5. In terms of biological role, catalyzes the reversible conversion of 3-phosphohydroxypyruvate to phosphoserine and of 3-hydroxy-2-oxo-4-phosphonooxybutanoate to phosphohydroxythreonine. The protein is Phosphoserine aminotransferase of Klebsiella pneumoniae (strain 342).